We begin with the raw amino-acid sequence, 458 residues long: Argininosuccinate lyase (458 aa).

Belongs to the lyase 1 family. Argininosuccinate lyase subfamily.

It localises to the cytoplasm. The catalysed reaction is 2-(N(omega)-L-arginino)succinate = fumarate + L-arginine. It participates in amino-acid biosynthesis; L-arginine biosynthesis; L-arginine from L-ornithine and carbamoyl phosphate: step 3/3. This Salmonella agona (strain SL483) protein is Argininosuccinate lyase.